The primary structure comprises 782 residues: uncharacterized protein (782 aa).

Residues 10-30 traverse the membrane as a helical segment; sequence LLTITIGAVAVSSILLGGIFY. Over residues 57–76 the composition is skewed to basic and acidic residues; sequence LDYQKARPSIKDSNLKEIPK. The tract at residues 57–171 is disordered; sequence LDYQKARPSI…PQPQQVPNNS (115 aa). Residues 77–97 show a composition bias toward pro residues; the sequence is PKPQPKPKPQPTPFPDPIPTP. The span at 98–124 shows a compositional bias: basic and acidic residues; that stretch reads PKKEELKKPDIKPEEPKKPEIKPEPKP. The span at 125–135 shows a compositional bias: pro residues; sequence EPIPQPAPPIE.

The protein to U.parvum UU046.

The protein localises to the membrane. This is an uncharacterized protein from Ureaplasma parvum serovar 3 (strain ATCC 700970).